The primary structure comprises 303 residues: N-acetyl-D-glucosamine kinase (303 aa).

Residues Gly4–Lys11 and Gly133–Phe140 each bind ATP. Residues His157, Cys177, Cys179, and Cys184 each contribute to the Zn(2+) site.

It belongs to the ROK (NagC/XylR) family. NagK subfamily.

The catalysed reaction is N-acetyl-D-glucosamine + ATP = N-acetyl-D-glucosamine 6-phosphate + ADP + H(+). It participates in cell wall biogenesis; peptidoglycan recycling. Catalyzes the phosphorylation of N-acetyl-D-glucosamine (GlcNAc) derived from cell-wall degradation, yielding GlcNAc-6-P. The chain is N-acetyl-D-glucosamine kinase from Escherichia coli O6:H1 (strain CFT073 / ATCC 700928 / UPEC).